The chain runs to 279 residues: Tryptophan synthase alpha chain (279 aa).

Residues Glu50 and Asp61 each act as proton acceptor in the active site.

Belongs to the TrpA family. In terms of assembly, tetramer of two alpha and two beta chains.

The enzyme catalyses (1S,2R)-1-C-(indol-3-yl)glycerol 3-phosphate + L-serine = D-glyceraldehyde 3-phosphate + L-tryptophan + H2O. Its pathway is amino-acid biosynthesis; L-tryptophan biosynthesis; L-tryptophan from chorismate: step 5/5. In terms of biological role, the alpha subunit is responsible for the aldol cleavage of indoleglycerol phosphate to indole and glyceraldehyde 3-phosphate. The polypeptide is Tryptophan synthase alpha chain (Brucella anthropi (strain ATCC 49188 / DSM 6882 / CCUG 24695 / JCM 21032 / LMG 3331 / NBRC 15819 / NCTC 12168 / Alc 37) (Ochrobactrum anthropi)).